Reading from the N-terminus, the 187-residue chain is Probable nicotinate-nucleotide adenylyltransferase (187 aa).

It belongs to the NadD family.

It carries out the reaction nicotinate beta-D-ribonucleotide + ATP + H(+) = deamido-NAD(+) + diphosphate. The protein operates within cofactor biosynthesis; NAD(+) biosynthesis; deamido-NAD(+) from nicotinate D-ribonucleotide: step 1/1. Its function is as follows. Catalyzes the reversible adenylation of nicotinate mononucleotide (NaMN) to nicotinic acid adenine dinucleotide (NaAD). In Anaeromyxobacter dehalogenans (strain 2CP-C), this protein is Probable nicotinate-nucleotide adenylyltransferase.